A 477-amino-acid polypeptide reads, in one-letter code: Histone-lysine N-methyltransferase SUV39H2 (477 aa).

The interval 1 to 59 is disordered; sequence MATARAKARGSEAGARCHRAPGPPPRPKARRTARRRRAETLTARRSRPSAGERRAGSQR. Over residues 27–37 the composition is skewed to basic residues; it reads PKARRTARRRR. Positions 118 to 176 constitute a Chromo domain; it reads YEVEYLCDYKVAKGVEYYLVKWKGWPDSTNTWEPLRNLRCPQLLRQFSDDKKTYLAQER. A Pre-SET domain is found at 256 to 314; that stretch reads FGCSCTDCFFDKCCPAEAGVVLAYNKKQQIKIQPGTPIYECNSRCRCGPECPNRIVQKG. Residues Cys-258, Cys-260, Cys-263, Cys-268, Cys-269, Cys-296, Cys-300, Cys-302, and Cys-306 each contribute to the Zn(2+) site. The SET domain occupies 317–440; sequence YSLCIFKTSN…AGEELTFDYQ (124 aa). Residues 328–330, Tyr-371, and 397–398 each bind S-adenosyl-L-methionine; these read CGW and NH. Residue Cys-400 coordinates Zn(2+). Ser-448, Ser-451, and Ser-455 each carry phosphoserine. One can recognise a Post-SET domain in the interval 461-477; that stretch reads VRTQCKCGAETCRGYLN. 3 residues coordinate Zn(2+): Cys-465, Cys-467, and Cys-472.

The protein belongs to the class V-like SAM-binding methyltransferase superfamily. Histone-lysine methyltransferase family. Suvar3-9 subfamily. In terms of assembly, interacts with SMAD5. The large PER complex involved in the histone methylation is composed of at least PER2, CBX3, TRIM28, SUV39H1 and/or SUV39H2; CBX3 mediates the formation of the complex. In terms of processing, ubiquitinated by the DCX(DCAF13) E3 ubiquitin ligase complex, leading to its degradation. Testis specific; predominant expression in type B spermatogonia and preleptotene spermatocytes.

It is found in the nucleus. Its subcellular location is the chromosome. The protein localises to the centromere. It catalyses the reaction L-lysyl(9)-[histone H3] + 3 S-adenosyl-L-methionine = N(6),N(6),N(6)-trimethyl-L-lysyl(9)-[histone H3] + 3 S-adenosyl-L-homocysteine + 3 H(+). Its function is as follows. Histone methyltransferase that specifically trimethylates 'Lys-9' of histone H3 using monomethylated H3 'Lys-9' as substrate. H3 'Lys-9' trimethylation represents a specific tag for epigenetic transcriptional repression by recruiting HP1 (CBX1, CBX3 and/or CBX5) proteins to methylated histones. Mainly functions in heterochromatin regions, thereby playing a central role in the establishment of constitutive heterochromatin at pericentric and telomere regions. H3 'Lys-9' trimethylation is also required to direct DNA methylation at pericentric repeats. SUV39H1 is targeted to histone H3 via its interaction with RB1 and is involved in many processes, such as cell cycle regulation, transcriptional repression and regulation of telomere length. May participate in regulation of higher-order chromatin organization during spermatogenesis. Recruited by the large PER complex to the E-box elements of the circadian target genes such as PER2 itself or PER1, contributes to the conversion of local chromatin to a heterochromatin-like repressive state through H3 'Lys-9' trimethylation. The chain is Histone-lysine N-methyltransferase SUV39H2 (Suv39h2) from Mus musculus (Mouse).